A 426-amino-acid polypeptide reads, in one-letter code: Putative two-component response regulator ARR20 (426 aa).

A Response regulatory domain is found at 40–155 (SNRVLLVGAD…VIAVLWRHVY (116 aa)). A 4-aspartylphosphate modification is found at Asp91. The interval 161-216 (KSGLDKPGESGTVESDPDEYDDLEQDNLYESNEEGSKNTCDHKEEKSPTKKPRMQW) is disordered. Over residues 175-193 (SDPDEYDDLEQDNLYESNE) the composition is skewed to acidic residues. Residues 194-208 (EGSKNTCDHKEEKSP) are compositionally biased toward basic and acidic residues. The Nuclear localization signal motif lies at 210–213 (KKPR). A DNA-binding region (myb-like GARP) is located at residues 213-268 (RMQWTPELHHKFEVAVEKMGSLEKAFPKTILKYMQEELNVQGLTRNNVASHLQKYR).

This sequence belongs to the ARR family. Type-B subfamily. In terms of assembly, binds the target DNA as a monomer. In terms of processing, two-component system major event consists of a His-to-Asp phosphorelay between a sensor histidine kinase (HK) and a response regulator (RR). In plants, the His-to-Asp phosphorelay involves an additional intermediate named Histidine-containing phosphotransfer protein (HPt). This multistep phosphorelay consists of a His-Asp-His-Asp sequential transfer of a phosphate group between first a His and an Asp of the HK protein, followed by the transfer to a conserved His of the HPt protein and finally the transfer to an Asp in the receiver domain of the RR protein. Predominantly expressed in mature pistil tip. Also detected in the shoot apical meristem as well as vascular tissue and hydathodes of the leaves.

It is found in the nucleus. Functionally, putative transcriptional activator that binds specifically to the DNA sequence 5'-[AG]GATT-3'. Functions as a response regulator involved in His-to-Asp phosphorelay signal transduction system. Phosphorylation of the Asp residue in the receiver domain activates the ability of the protein to promote the transcription of target genes. Could directly activate some type-A response regulators in response to cytokinins. This chain is Putative two-component response regulator ARR20 (ARR20), found in Arabidopsis thaliana (Mouse-ear cress).